The sequence spans 363 residues: Pyrimidine monooxygenase RutA (363 aa).

FMN is bound by residues 49–50 (IK), N115, E124, 140–141 (RY), and S190.

It belongs to the NtaA/SnaA/DszA monooxygenase family. RutA subfamily.

The enzyme catalyses uracil + FMNH2 + NADH + O2 = (Z)-3-ureidoacrylate + FMN + NAD(+) + H2O + H(+). It carries out the reaction thymine + FMNH2 + NADH + O2 = (Z)-2-methylureidoacrylate + FMN + NAD(+) + H2O + H(+). In terms of biological role, catalyzes the pyrimidine ring opening between N-3 and C-4 by an unusual flavin hydroperoxide-catalyzed mechanism, adding oxygen atoms in the process to yield ureidoacrylate peracid, that immediately reacts with FMN forming ureidoacrylate and FMN-N(5)-oxide. The FMN-N(5)-oxide reacts spontaneously with NADH to produce FMN. Requires the flavin reductase RutF to regenerate FMN in vivo. The protein is Pyrimidine monooxygenase RutA of Escherichia coli (strain SMS-3-5 / SECEC).